The following is a 185-amino-acid chain: Ribosome-recycling factor (185 aa).

The protein belongs to the RRF family.

The protein localises to the cytoplasm. Functionally, responsible for the release of ribosomes from messenger RNA at the termination of protein biosynthesis. May increase the efficiency of translation by recycling ribosomes from one round of translation to another. The sequence is that of Ribosome-recycling factor from Chloroflexus aurantiacus (strain ATCC 29364 / DSM 637 / Y-400-fl).